The primary structure comprises 645 residues: UPF0313 protein CLK_3381 (645 aa).

One can recognise a Radical SAM core domain in the interval 295 to 566 (AIKEVKFSIT…RMQRALLQFS (272 aa)). [4Fe-4S] cluster contacts are provided by C309, C313, and C316. Positions 598 to 645 (NKPYKKSHKKNNVKNNNNHYNKNNNYNKNKDVSKKNKKNSLSKHKKRK) are disordered. Residues 600–609 (PYKKSHKKNN) are compositionally biased toward basic residues. Residues 610–624 (VKNNNNHYNKNNNYN) are compositionally biased toward low complexity. The segment covering 632–645 (KNKKNSLSKHKKRK) has biased composition (basic residues).

Belongs to the UPF0313 family. It depends on [4Fe-4S] cluster as a cofactor.

The sequence is that of UPF0313 protein CLK_3381 from Clostridium botulinum (strain Loch Maree / Type A3).